Consider the following 258-residue polypeptide: Probable enoyl-CoA hydratase (258 aa).

Belongs to the enoyl-CoA hydratase/isomerase family.

The catalysed reaction is a (3S)-3-hydroxyacyl-CoA = a (2E)-enoyl-CoA + H2O. The enzyme catalyses a 4-saturated-(3S)-3-hydroxyacyl-CoA = a (3E)-enoyl-CoA + H2O. The protein operates within lipid metabolism; fatty acid beta-oxidation. In terms of biological role, involved in the degradation of long-chain fatty acids. The chain is Probable enoyl-CoA hydratase (fadB) from Bacillus subtilis (strain 168).